Reading from the N-terminus, the 448-residue chain is Probable glycine dehydrogenase (decarboxylating) subunit 1 (448 aa).

The protein belongs to the GcvP family. N-terminal subunit subfamily. As to quaternary structure, the glycine cleavage system is composed of four proteins: P, T, L and H. In this organism, the P 'protein' is a heterodimer of two subunits.

It catalyses the reaction N(6)-[(R)-lipoyl]-L-lysyl-[glycine-cleavage complex H protein] + glycine + H(+) = N(6)-[(R)-S(8)-aminomethyldihydrolipoyl]-L-lysyl-[glycine-cleavage complex H protein] + CO2. Functionally, the glycine cleavage system catalyzes the degradation of glycine. The P protein binds the alpha-amino group of glycine through its pyridoxal phosphate cofactor; CO(2) is released and the remaining methylamine moiety is then transferred to the lipoamide cofactor of the H protein. In Thermomicrobium roseum (strain ATCC 27502 / DSM 5159 / P-2), this protein is Probable glycine dehydrogenase (decarboxylating) subunit 1.